Here is a 1083-residue protein sequence, read N- to C-terminus: Glutamate receptor-interacting protein 2 (1083 aa).

3 PDZ domains span residues 58–141 (IVEL…EYEL), 156–244 (TIEI…EYDV), and 258–342 (LVEI…LPAH). Over residues 408–422 (AGTPGFSSQNSNTLP) the composition is skewed to polar residues. The segment at 408–460 (AGTPGFSSQNSNTLPRTVHPMSPRTTMNRRRQKRKDHKSSLSLASSTVGPGGQ) is disordered. A compositionally biased stretch (basic residues) spans 434 to 444 (MNRRRQKRKDH). PDZ domains follow at residues 468 to 555 (EIIL…EIEF), 569 to 652 (HVKL…RKDE), and 667 to 749 (TVEL…KKQT). Disordered stretches follow at residues 754–783 (PQRL…LSEI), 853–872 (NEQD…GLET), and 936–965 (GSHH…VHNA). Over residues 774 to 783 (SQKTSKLSEI) the composition is skewed to polar residues. A compositionally biased stretch (basic and acidic residues) spans 945 to 963 (PKKENKLSQDARSKKEEVH). A PDZ 7 domain is found at 974 to 1056 (KVTVQKDMDT…RLDLVISRGL (83 aa)).

This sequence belongs to the GRIP2 family. As to expression, enriched in the mitochondrial cloud of stage I oocytes, before becoming concentrated at the tip of the vegetal cortex in stage II oocytes. Expression becomes localized to the germ plasm of stage III-IV oocytes and early cleavage stages. At the tailbud stage, localizes to the migrating primordial germ cells (PGCs) until PGC migration is complete (stage 40), at which point expression disappears. In the adult, expressed in the brain, ovary, eye, muscle, spinal cord and very weakly in adipocytes.

Its subcellular location is the cytoplasm. Plays an important role in primordial germ cell (PGC) maintenance and efficiency of PGC migration. In Xenopus laevis (African clawed frog), this protein is Glutamate receptor-interacting protein 2.